The primary structure comprises 393 residues: Prokineticin receptor 1 (393 aa).

Over 1 to 62 the chain is Extracellular; sequence METTMGFMDD…TNSRTFFAAK (62 aa). 3 N-linked (GlcNAc...) asparagine glycosylation sites follow: Asn11, Asn14, and Asn36. A helical transmembrane segment spans residues 63–83; it reads IVIGMALVGIMLVCGIGNFIF. Topologically, residues 84 to 98 are cytoplasmic; the sequence is IAALVRYKKLRNLTN. A helical transmembrane segment spans residues 99–119; sequence LLIANLAISDFLVAIVCCPFE. Over 120 to 146 the chain is Extracellular; that stretch reads MDYYVVRQLSWEHGHVLCTSVNYLRTV. Cys137 and Cys217 form a disulfide bridge. Residues 147–167 form a helical membrane-spanning segment; the sequence is SLYVSTNALLAIAIDRYLAIV. Over 168–180 the chain is Cytoplasmic; that stretch reads HPLRPRMKCQTAT. The chain crosses the membrane as a helical span at residues 181–201; the sequence is GLIALVWTVSILIAIPSAYFT. Residues 202 to 232 lie on the Extracellular side of the membrane; it reads TETVLVIVKSQEKIFCGQIWPVDQQLYYKSY. A helical membrane pass occupies residues 233-253; that stretch reads FLFIFGIEFVGPVVTMTLCYA. Topologically, residues 254–282 are cytoplasmic; that stretch reads RISRELWFKAVPGFQTEQIRKRLRCRRKT. The helical transmembrane segment at 283 to 303 threads the bilayer; the sequence is VLVLMCILTAYVLCWAPFYGF. The Extracellular portion of the chain corresponds to 304-322; sequence TIVRDFFPTVFVKEKHYLT. A helical membrane pass occupies residues 323 to 343; that stretch reads AFYIVECIAMSNSMINTLCFV. Over 344 to 393 the chain is Cytoplasmic; sequence TVKNDTVKYFKKIMLLHWKASYNGGKSSADLDLKTIGMPATEEVDCIRLK.

Belongs to the G-protein coupled receptor 1 family. As to expression, localizes to glandular epithelium, stroma and vascular endothelial cells of first trimester decidua (at protein level). Up-regulated in first trimester decidua when compared with non-pregnant endometrium. Expressed in the stomach, throughout the small intestine, colon, rectum, thyroid gland, pituitary gland, salivary gland, adrenal gland, testis, ovary, brain, spleen, prostate and pancreas.

The protein resides in the cell membrane. In terms of biological role, receptor for prokineticin 1. Exclusively coupled to the G(q) subclass of heteromeric G proteins. Activation leads to mobilization of calcium, stimulation of phosphoinositide turnover and activation of p44/p42 mitogen-activated protein kinase. May play a role during early pregnancy. This Homo sapiens (Human) protein is Prokineticin receptor 1 (PROKR1).